Reading from the N-terminus, the 169-residue chain is Protein-export protein SecB (169 aa).

It belongs to the SecB family. As to quaternary structure, homotetramer, a dimer of dimers. One homotetramer interacts with 1 SecA dimer.

It is found in the cytoplasm. One of the proteins required for the normal export of preproteins out of the cell cytoplasm. It is a molecular chaperone that binds to a subset of precursor proteins, maintaining them in a translocation-competent state. It also specifically binds to its receptor SecA. This is Protein-export protein SecB from Pseudoalteromonas atlantica (strain T6c / ATCC BAA-1087).